The primary structure comprises 159 residues: Phosphopantetheine adenylyltransferase (159 aa).

Position 9 (T9) interacts with substrate. Residues 9–10 and H17 contribute to the ATP site; that span reads TF. Substrate-binding residues include K41, L73, and R87. Residues 88 to 90, E98, and 123 to 129 each bind ATP; these read GLR and YSFISST.

It belongs to the bacterial CoaD family. In terms of assembly, homohexamer. The cofactor is Mg(2+).

The protein localises to the cytoplasm. The enzyme catalyses (R)-4'-phosphopantetheine + ATP + H(+) = 3'-dephospho-CoA + diphosphate. Its pathway is cofactor biosynthesis; coenzyme A biosynthesis; CoA from (R)-pantothenate: step 4/5. Functionally, reversibly transfers an adenylyl group from ATP to 4'-phosphopantetheine, yielding dephospho-CoA (dPCoA) and pyrophosphate. The sequence is that of Phosphopantetheine adenylyltransferase from Pseudomonas fluorescens (strain ATCC BAA-477 / NRRL B-23932 / Pf-5).